The chain runs to 663 residues: (R)-specific secondary-alkylsulfatase (663 aa).

The N-terminal stretch at 1–28 (MSRFIRASQRRTLLATLIAATLAQPLLA) is a signal peptide. The Zn(2+) site is built by H179, H181, D183, and H184. Residue Q232 coordinates sulfate. Zn(2+)-binding residues include E291 and D310. Residues 318-323 (NLLTPR) and R328 each bind sulfate. H355 is a Zn(2+) binding site. Position 417 (Y417) interacts with sulfate.

Belongs to the metallo-beta-lactamase superfamily. Type III sulfatase family. In terms of assembly, homodimer.

The enzyme catalyses an (R)-secondary-alkyl sulfate + H2O = an (S)-secondary-alcohol + sulfate.. Functionally, alkylsulfatase that catalyzes the enantioselective hydrolysis of secondary-alkylsulfates with strict inversion of configuration, leading to the formation of homochiral (S)-configurated alcohols and nonreacted sulfate esters. The substrate spectrum includes a range of linear, branched or cyclic sec-alkylsulfates. Can use sec-alkylsulfate esters bearing aromatic, olefinic and acetylenic moieties. Acts by cleaving the C-O bond, resulting in inversion at the carbon. The chain is (R)-specific secondary-alkylsulfatase from Pseudomonas sp.